Here is a 443-residue protein sequence, read N- to C-terminus: Leucine-rich repeat-containing protein 17 (443 aa).

Residues 1–15 (MRIVAILLLFCLCRA) form the signal peptide. Residues 20–48 (KSSPGVLRSQGNPSRSHGRGGRRGSSPVK) form a disordered region. 3 LRR repeats span residues 84-105 (DLLH…MFAK), 108-129 (RLKS…AFFG), and 132-153 (KLTT…AFIY). An LRRCT 1 domain is found at 165 to 216 (NPWHCTCELETLISMLQIPRNRNLGNYAKCGSPPALRNKKLLQLKPQELCDE). Residues 229–270 (SGIPAVIRPEADSTLCHNYVFPIQTLDCKRKELKKVPSNIPP) form the LRRNT domain. LRR repeat units lie at residues 271 to 292 (DIVK…EFED), 295 to 316 (ELKK…AFLG), and 319 to 342 (HLEE…EDLY). The LRRCT 2 domain occupies 352–404 (NPWRCDYSIHYLYYWLKHHYNVHYNGLECKTPEEYKGWSVGKYVRSYYEECPK).

As to expression, expressed in osteoblasts, spleen, lung and heart.

The protein localises to the secreted. It is found in the extracellular space. In terms of biological role, involved in bone homeostasis. Acts as a negative regulator of RANKL-induced osteoclast precursor differentiation from bone marrow precursors. This is Leucine-rich repeat-containing protein 17 (Lrrc17) from Mus musculus (Mouse).